The sequence spans 839 residues: Autophagy-related protein 9A (839 aa).

The tract at residues 1–20 (MAQFDTEYQRLEASYSDSPP) is disordered. Ala-2 is modified (N-acetylalanine). Over 2 to 61 (AQFDTEYQRLEASYSDSPPGEEDLLVHVAEGSKSPWHHIENLDLFFSRVYNLHQKNGFTC) the chain is Cytoplasmic. Residues 8–11 (YQRL) carry the Tyrosine-based sorting signal motif. 3 positions are modified to phosphoserine: Ser-14, Ser-16, and Ser-18. The chain crosses the membrane as a helical span at residues 62 to 84 (MLIGEIFELMQFLFVVAFTTFLV). Over 85 to 128 (SCVDYDILFANKMVNHSLHPTEPVKVTLPDAFLPAQVCSARIQE) the chain is Lumenal. N-linked (GlcNAc...) asparagine glycosylation occurs at Asn-99. A helical membrane pass occupies residues 129 to 154 (NGSLITILVIAGVFWIHRLIKFIYNI). Residues 155–290 (CCYWEIHSFY…ELAQRLSNRI (136 aa)) are Cytoplasmic-facing. Residues 291–301 (LWIGIANFLLC) lie within the membrane without spanning it. The Cytoplasmic portion of the chain corresponds to 302–319 (PLILIWQILYAFFSYAEV). An intramembrane segment occupies 320–328 (LKREPGALG). Residues 329–371 (ARCWSLYGRCYLRHFNELEHELQSRLNRGYKPASKYMNCFLSP) are Cytoplasmic-facing. Residues 372–397 (LLTLLAKNGAFFAGSILAVLIALTIY) form a helical membrane-spanning segment. Residues 398 to 406 (DEDVLAVEH) lie on the Lumenal side of the membrane. A helical membrane pass occupies residues 407–424 (VLTTVTLLGVTVTVCRSF). Residues 425 to 470 (IPDQHMVFCPEQLLRVILAHIHYMPDHWQGNAHRSQTRDEFAQLFQ) are Cytoplasmic-facing. Residues 471–480 (YKAVFILEEL) lie within the membrane without spanning it. The Cytoplasmic portion of the chain corresponds to 481-483 (LSP). The stretch at 484-492 (IVTPLILIF) is an intramembrane region. Over 493–839 (CLRPRALEII…DELPPQVHKV (347 aa)) the chain is Cytoplasmic. A phosphoserine mark is found at Ser-656, Ser-735, Ser-738, Ser-741, and Ser-828. 2 disordered regions span residues 656 to 686 (SPLQ…SSGS) and 717 to 839 (HKQQ…VHKV). Over residues 724 to 736 (EPERHVWHRRESD) the composition is skewed to basic and acidic residues. Composition is skewed to acidic residues over residues 737–747 (ESGESAPDEGG) and 823–832 (VPEEGSEDEL).

It belongs to the ATG9 family. In terms of assembly, homotrimer; forms a homotrimer with a central pore that forms a path between the two membrane leaflets. Interacts (via cytoplasmic its C-terminus) with ATG2A. Interacts with SUPT20H. Interacts (via the tyrosine-based sorting signal motif) with AP4M1; promoting association with the AP-4 complex. Interacts with ARFIP1 and ARFIP2. Interacts with PI4K2A and PI4KB. Interacts with ATG4A; the interaction is direct and promotes ATG9A trafficking. In terms of processing, ufmylated in a DDRGK1 dependent manner.

The protein localises to the preautophagosomal structure membrane. Its subcellular location is the cytoplasmic vesicle. It localises to the autophagosome membrane. It is found in the golgi apparatus. The protein resides in the trans-Golgi network membrane. The protein localises to the late endosome membrane. Its subcellular location is the recycling endosome membrane. It localises to the endoplasmic reticulum membrane. It is found in the mitochondrion membrane. It catalyses the reaction a 1,2-diacyl-sn-glycero-3-phosphocholine(in) = a 1,2-diacyl-sn-glycero-3-phosphocholine(out). It carries out the reaction a 1,2-diacyl-sn-glycero-3-phospho-L-serine(in) = a 1,2-diacyl-sn-glycero-3-phospho-L-serine(out). The catalysed reaction is a 1,2-diacyl-sn-glycero-3-phosphoethanolamine(in) = a 1,2-diacyl-sn-glycero-3-phosphoethanolamine(out). Functionally, phospholipid scramblase involved in autophagy by mediating autophagosomal membrane expansion. Cycles between the preautophagosomal structure/phagophore assembly site (PAS) and the cytoplasmic vesicle pool and supplies membrane for the growing autophagosome. Lipid scramblase activity plays a key role in preautophagosomal structure/phagophore assembly by distributing the phospholipids that arrive through ATG2 (ATG2A or ATG2B) from the cytoplasmic to the luminal leaflet of the bilayer, thereby driving autophagosomal membrane expansion. Also required to supply phosphatidylinositol 4-phosphate to the autophagosome initiation site by recruiting the phosphatidylinositol 4-kinase beta (PI4KB) in a process dependent on ARFIP2, but not ARFIP1. In addition to autophagy, also plays a role in necrotic cell death. The chain is Autophagy-related protein 9A from Homo sapiens (Human).